A 154-amino-acid chain; its full sequence is MQEKSIRLGIVVAEFNYDITQLMLQKALSHAKFLNAEVKVVIKVPGTFDMPLAIKKLLEKDFIDAVVTLGAVIKGETKHDEIVASQTARKIVDLSTEFNKPVTLGIIGHGATHEQAVERIEEYATRAVEAAIKLVQRTRKIDELKEVKETVIID.

Residues Phe15, 47-49 (TFD), and 71-73 (AVI) each bind 5-amino-6-(D-ribitylamino)uracil. Residue 76-77 (ET) participates in (2S)-2-hydroxy-3-oxobutyl phosphate binding. Catalysis depends on His79, which acts as the Proton donor. Leu104 lines the 5-amino-6-(D-ribitylamino)uracil pocket. Arg119 provides a ligand contact to (2S)-2-hydroxy-3-oxobutyl phosphate.

The protein belongs to the DMRL synthase family.

The enzyme catalyses (2S)-2-hydroxy-3-oxobutyl phosphate + 5-amino-6-(D-ribitylamino)uracil = 6,7-dimethyl-8-(1-D-ribityl)lumazine + phosphate + 2 H2O + H(+). Its pathway is cofactor biosynthesis; riboflavin biosynthesis; riboflavin from 2-hydroxy-3-oxobutyl phosphate and 5-amino-6-(D-ribitylamino)uracil: step 1/2. In terms of biological role, catalyzes the formation of 6,7-dimethyl-8-ribityllumazine by condensation of 5-amino-6-(D-ribitylamino)uracil with 3,4-dihydroxy-2-butanone 4-phosphate. This is the penultimate step in the biosynthesis of riboflavin. This is 6,7-dimethyl-8-ribityllumazine synthase from Saccharolobus islandicus (strain L.S.2.15 / Lassen #1) (Sulfolobus islandicus).